Reading from the N-terminus, the 394-residue chain is Elongation factor Tu (394 aa).

The tr-type G domain occupies 10 to 204 (KPHVNVGTIG…HLDTYIPEPE (195 aa)). Positions 19–26 (GHVDHGKT) are G1. GTP is bound at residue 19 to 26 (GHVDHGKT). Position 26 (T26) interacts with Mg(2+). The tract at residues 60–64 (GITIN) is G2. Residues 81–84 (DCPG) are G3. Residues 81-85 (DCPGH) and 136-139 (NKCD) each bind GTP. Residues 136 to 139 (NKCD) are G4. Residues 174-176 (SAL) form a G5 region.

This sequence belongs to the TRAFAC class translation factor GTPase superfamily. Classic translation factor GTPase family. EF-Tu/EF-1A subfamily. In terms of assembly, monomer.

It localises to the cytoplasm. The catalysed reaction is GTP + H2O = GDP + phosphate + H(+). In terms of biological role, GTP hydrolase that promotes the GTP-dependent binding of aminoacyl-tRNA to the A-site of ribosomes during protein biosynthesis. This is Elongation factor Tu from Actinobacillus pleuropneumoniae serotype 5b (strain L20).